The sequence spans 421 residues: L-Ala-D/L-amino acid epimerase (421 aa).

Residues Thr193 and 218–220 contribute to the substrate site; that span reads KLK. Asp247, Glu275, and Asp304 together coordinate Mg(2+). Substrate is bound by residues Lys328 and 380-382; that span reads DLD.

This sequence belongs to the mandelate racemase/muconate lactonizing enzyme family. It depends on Mg(2+) as a cofactor.

In terms of biological role, catalyzes the epimerization of various hydrophobic and polar dipeptides. Has epimerase activity with L-Ala-L-Ala, L-Ala-L-Ser, L-Ala-L-Thr and L-Ala-L-Trp (in vitro). The chain is L-Ala-D/L-amino acid epimerase from Populus trichocarpa (Western balsam poplar).